We begin with the raw amino-acid sequence, 490 residues long: Betaine aldehyde dehydrogenase (490 aa).

Thr-26, Ile-27, and Asp-93 together coordinate K(+). Position 150–152 (150–152 (GAW)) interacts with NAD(+). The active-site Charge relay system is the Lys-162. 176–179 (KPSE) serves as a coordination point for NAD(+). Val-180 contacts K(+). Position 230 to 233 (230 to 233 (GVAS)) interacts with NAD(+). Position 246 (Leu-246) interacts with K(+). The Proton acceptor role is filled by Glu-252. Residues Gly-254, Cys-286, and Glu-387 each coordinate NAD(+). Cys-286 functions as the Nucleophile in the catalytic mechanism. A Cysteine sulfenic acid (-SOH) modification is found at Cys-286. K(+)-binding residues include Lys-457 and Gly-460. Glu-464 functions as the Charge relay system in the catalytic mechanism.

Belongs to the aldehyde dehydrogenase family. In terms of assembly, dimer of dimers. K(+) serves as cofactor.

It catalyses the reaction betaine aldehyde + NAD(+) + H2O = glycine betaine + NADH + 2 H(+). The protein operates within amine and polyamine biosynthesis; betaine biosynthesis via choline pathway; betaine from betaine aldehyde: step 1/1. Functionally, involved in the biosynthesis of the osmoprotectant glycine betaine. Catalyzes the irreversible oxidation of betaine aldehyde to the corresponding acid. This chain is Betaine aldehyde dehydrogenase, found in Escherichia coli (strain 55989 / EAEC).